A 149-amino-acid polypeptide reads, in one-letter code: D-aminoacyl-tRNA deacylase (149 aa).

The Gly-cisPro motif, important for rejection of L-amino acids signature appears at 138 to 139 (GP).

This sequence belongs to the DTD family. As to quaternary structure, homodimer.

It is found in the cytoplasm. The catalysed reaction is glycyl-tRNA(Ala) + H2O = tRNA(Ala) + glycine + H(+). It catalyses the reaction a D-aminoacyl-tRNA + H2O = a tRNA + a D-alpha-amino acid + H(+). In terms of biological role, an aminoacyl-tRNA editing enzyme that deacylates mischarged D-aminoacyl-tRNAs. Also deacylates mischarged glycyl-tRNA(Ala), protecting cells against glycine mischarging by AlaRS. Acts via tRNA-based rather than protein-based catalysis; rejects L-amino acids rather than detecting D-amino acids in the active site. By recycling D-aminoacyl-tRNA to D-amino acids and free tRNA molecules, this enzyme counteracts the toxicity associated with the formation of D-aminoacyl-tRNA entities in vivo and helps enforce protein L-homochirality. The chain is D-aminoacyl-tRNA deacylase from Chlorobaculum parvum (strain DSM 263 / NCIMB 8327) (Chlorobium vibrioforme subsp. thiosulfatophilum).